We begin with the raw amino-acid sequence, 297 residues long: N-acetylneuraminate lyase (297 aa).

S47 and T48 together coordinate aceneuramate. Residue Y137 is the Proton donor of the active site. K165 acts as the Schiff-base intermediate with substrate in catalysis. Aceneuramate-binding residues include T167, G189, D191, E192, and S208.

The protein belongs to the DapA family. NanA subfamily. In terms of assembly, homotetramer.

Its subcellular location is the cytoplasm. It catalyses the reaction aceneuramate = aldehydo-N-acetyl-D-mannosamine + pyruvate. It participates in amino-sugar metabolism; N-acetylneuraminate degradation; D-fructose 6-phosphate from N-acetylneuraminate: step 1/5. Catalyzes the reversible aldol cleavage of N-acetylneuraminic acid (sialic acid; Neu5Ac) to form pyruvate and N-acetylmannosamine (ManNAc) via a Schiff base intermediate. This is N-acetylneuraminate lyase from Enterobacter sp. (strain 638).